The following is a 338-amino-acid chain: Aspartate-semialdehyde dehydrogenase (338 aa).

NADP(+) contacts are provided by residues Thr13–Val16 and Ser41–Ser42. Arg101 is a phosphate binding site. The active-site Acyl-thioester intermediate is Cys132. Position 159 (Gln159) interacts with substrate. Residues Ser162–Gly163 and Pro187 each bind NADP(+). Lys216 is a binding site for phosphate. Position 237 (Arg237) interacts with substrate. His244 functions as the Proton acceptor in the catalytic mechanism. NADP(+) is bound at residue Asn317.

This sequence belongs to the aspartate-semialdehyde dehydrogenase family. Homodimer.

The catalysed reaction is L-aspartate 4-semialdehyde + phosphate + NADP(+) = 4-phospho-L-aspartate + NADPH + H(+). Its pathway is amino-acid biosynthesis; L-lysine biosynthesis via DAP pathway; (S)-tetrahydrodipicolinate from L-aspartate: step 2/4. It functions in the pathway amino-acid biosynthesis; L-methionine biosynthesis via de novo pathway; L-homoserine from L-aspartate: step 2/3. It participates in amino-acid biosynthesis; L-threonine biosynthesis; L-threonine from L-aspartate: step 2/5. Functionally, catalyzes the NADPH-dependent formation of L-aspartate-semialdehyde (L-ASA) by the reductive dephosphorylation of L-aspartyl-4-phosphate. This is Aspartate-semialdehyde dehydrogenase from Rickettsia conorii (strain ATCC VR-613 / Malish 7).